Reading from the N-terminus, the 723-residue chain is Nuclear intron maturase 3, mitochondrial (723 aa).

The transit peptide at 1–26 directs the protein to the mitochondrion; sequence MVLRLRVHSFYNRGISFLVSSSLRNL. The intron maturase type-2; degenerate stretch occupies residues 532 to 597; sequence VSAPEELVRK…HYTKDLRVSD (66 aa). A THAP-type zinc finger spans residues 646–700; the sequence is CAASFCERSDTIMHRVHLLQNRLHINPLDEEKWVPGMGTIHSALNRKCLPLCSTH.

The protein belongs to the plant nuclear intron maturase (nMat) family.

Its subcellular location is the mitochondrion. Nuclear-encoded maturase required for splicing of group-II introns in mitochondria. Necessary for mitochondrial biogenesis during early developmental stages. The chain is Nuclear intron maturase 3, mitochondrial from Arabidopsis thaliana (Mouse-ear cress).